The following is a 174-amino-acid chain: Crossover junction endodeoxyribonuclease RuvC (174 aa).

Active-site residues include Asp8, Glu67, and Asp139. Mg(2+)-binding residues include Asp8, Glu67, and Asp139.

It belongs to the RuvC family. As to quaternary structure, homodimer which binds Holliday junction (HJ) DNA. The HJ becomes 2-fold symmetrical on binding to RuvC with unstacked arms; it has a different conformation from HJ DNA in complex with RuvA. In the full resolvosome a probable DNA-RuvA(4)-RuvB(12)-RuvC(2) complex forms which resolves the HJ. The cofactor is Mg(2+).

It localises to the cytoplasm. The enzyme catalyses Endonucleolytic cleavage at a junction such as a reciprocal single-stranded crossover between two homologous DNA duplexes (Holliday junction).. In terms of biological role, the RuvA-RuvB-RuvC complex processes Holliday junction (HJ) DNA during genetic recombination and DNA repair. Endonuclease that resolves HJ intermediates. Cleaves cruciform DNA by making single-stranded nicks across the HJ at symmetrical positions within the homologous arms, yielding a 5'-phosphate and a 3'-hydroxyl group; requires a central core of homology in the junction. The consensus cleavage sequence is 5'-(A/T)TT(C/G)-3'. Cleavage occurs on the 3'-side of the TT dinucleotide at the point of strand exchange. HJ branch migration catalyzed by RuvA-RuvB allows RuvC to scan DNA until it finds its consensus sequence, where it cleaves and resolves the cruciform DNA. The protein is Crossover junction endodeoxyribonuclease RuvC of Ectopseudomonas mendocina (strain ymp) (Pseudomonas mendocina).